A 67-amino-acid chain; its full sequence is ATP synthase protein 8 (67 aa).

The chain crosses the membrane as a helical span at residues Thr-8 to Phe-24. Residue Lys-54 is modified to N6-acetyllysine; alternate. Lys-54 is subject to N6-succinyllysine; alternate. Position 57 is an N6-acetyllysine (Lys-57).

It belongs to the ATPase protein 8 family. As to quaternary structure, F-type ATPases have 2 components, CF(1) - the catalytic core - and CF(0) - the membrane proton channel. Component of an ATP synthase complex composed of ATP5PB, ATP5MC1, ATP5F1E, ATP5PD, ATP5ME, ATP5PF, ATP5MF, MT-ATP6, MT-ATP8, ATP5F1A, ATP5F1B, ATP5F1D, ATP5F1C, ATP5PO, ATP5MG, ATP5MK and ATP5MJ. Interacts with PRICKLE3.

The protein resides in the mitochondrion membrane. Mitochondrial membrane ATP synthase (F(1)F(0) ATP synthase or Complex V) produces ATP from ADP in the presence of a proton gradient across the membrane which is generated by electron transport complexes of the respiratory chain. F-type ATPases consist of two structural domains, F(1) - containing the extramembraneous catalytic core and F(0) - containing the membrane proton channel, linked together by a central stalk and a peripheral stalk. During catalysis, ATP synthesis in the catalytic domain of F(1) is coupled via a rotary mechanism of the central stalk subunits to proton translocation. Part of the complex F(0) domain. Minor subunit located with subunit a in the membrane. The protein is ATP synthase protein 8 (MT-ATP8) of Rhinoceros unicornis (Greater Indian rhinoceros).